A 584-amino-acid polypeptide reads, in one-letter code: AAA ATPase forming ring-shaped complexes (584 aa).

The stretch at 10–96 forms a coiled coil; it reads AQSGTEHAEQ…LKENLDAVTH (87 aa). Residues 40-66 are disordered; the sequence is HQLQSAQRHAAGLSERRRAAEAQTQTA. 292–297 is an ATP binding site; sequence GTGKTM.

This sequence belongs to the AAA ATPase family. As to quaternary structure, homohexamer. Assembles into a hexameric ring structure.

The chain is AAA ATPase forming ring-shaped complexes from Micrococcus luteus (strain ATCC 4698 / DSM 20030 / JCM 1464 / CCM 169 / CCUG 5858 / IAM 1056 / NBRC 3333 / NCIMB 9278 / NCTC 2665 / VKM Ac-2230) (Micrococcus lysodeikticus).